A 255-amino-acid chain; its full sequence is Flap endonuclease Xni (255 aa).

Mg(2+) is bound at residue Asp105. A 5'-3' exonuclease domain is found at 162–253 (EHSQFIDYLA…NLSQFRLPNP (92 aa)). K(+)-binding residues include Leu172, Ala173, Pro181, Val183, and Ile186. Residues 185-190 (GIGPKS) form an interaction with DNA region.

It belongs to the Xni family. Mg(2+) serves as cofactor. The cofactor is K(+).

Its function is as follows. Has flap endonuclease activity. During DNA replication, flap endonucleases cleave the 5'-overhanging flap structure that is generated by displacement synthesis when DNA polymerase encounters the 5'-end of a downstream Okazaki fragment. This is Flap endonuclease Xni from Shewanella sediminis (strain HAW-EB3).